Consider the following 384-residue polypeptide: Substance-K receptor (384 aa).

The Extracellular portion of the chain corresponds to 1-32 (MGACVVMTDINISSGLDSNATGITAFSMPGWQ). Asn-11 and Asn-19 each carry an N-linked (GlcNAc...) asparagine glycan. A helical membrane pass occupies residues 33–56 (LALWTAAYLALVLVAVMGNATVIW). Residues 57–69 (IILAHQRMRTVTN) lie on the Cytoplasmic side of the membrane. The chain crosses the membrane as a helical span at residues 70–90 (YFIVNLALADLCMAAFNAAFN). Residues 91-107 (FVYASHNIWYFGRAFCY) lie on the Extracellular side of the membrane. Cys-106 and Cys-181 form a disulfide bridge. The chain crosses the membrane as a helical span at residues 108 to 129 (FQNLFPITAMFVSIYSMTAIAA). The Cytoplasmic portion of the chain corresponds to 130–149 (DRYMAIVHPFQPRLSAPGTR). The chain crosses the membrane as a helical span at residues 150–170 (AVIAGIWLVALALAFPQCFYS). Over 171–196 (TITTDEGATKCVVAWPEDSGGKMLLL) the chain is Extracellular. A helical transmembrane segment spans residues 197-218 (YHLIVIALIYFLPLVVMFVAYS). The Cytoplasmic portion of the chain corresponds to 219-251 (VIGLTLWRRSVPGHQAHGANLRHLQAKKKFVKT). Residues 252–272 (MVLVVVTFAICWLPYHLYFIL) traverse the membrane as a helical segment. At 273 to 290 (GTFQEDIYCHKFIQQVYL) the chain is on the extracellular side. Residues 291-310 (ALFWLAMSSTMYNPIIYCCL) traverse the membrane as a helical segment. The Cytoplasmic portion of the chain corresponds to 311–384 (NHRFRSGFRL…SPQAGVSTEP (74 aa)). Residue Cys-324 is the site of S-palmitoyl cysteine attachment.

It belongs to the G-protein coupled receptor 1 family.

Its subcellular location is the cell membrane. In terms of biological role, this is a receptor for the tachykinin neuropeptide substance K (neurokinin A). It is associated with G proteins that activate a phosphatidylinositol-calcium second messenger system. The rank order of affinity of this receptor to tachykinins is: substance K &gt; neuromedin-K &gt; substance P. The protein is Substance-K receptor (TACR2) of Bos taurus (Bovine).